We begin with the raw amino-acid sequence, 334 residues long: MHVIAVDAMGGDNAPQAIVEGVNQALAEFKDIEIQLYGDEAKIKNYLIANERVSIVHTDEKINSDDEPVKAIRKKKKASMVLGAQAVKEKAADAVISAGNTGALLAAGLFVVGRIKGVERPGLMSTMPSFTGQPFDMLDLGANAENTANHLHQYAILGSFYAKNVRGIATPRVGLLNNGTEKTKGDSLRKEAFELLSQEASINFIGNVEAREIMSGAADVVVADGFTGNAVLKAIEGTGLGTMKTLKSAIMNGGLKAKLGAFLLKDRLKGMKETMDYSSAGGAVLFGLKAPVVKCHGSSDAKAVYYTIKQVRKMLDTKVVEQLVDAFDPKEEVN.

This sequence belongs to the PlsX family. In terms of assembly, homodimer. Probably interacts with PlsY.

The protein localises to the cytoplasm. It carries out the reaction a fatty acyl-[ACP] + phosphate = an acyl phosphate + holo-[ACP]. It functions in the pathway lipid metabolism; phospholipid metabolism. Catalyzes the reversible formation of acyl-phosphate (acyl-PO(4)) from acyl-[acyl-carrier-protein] (acyl-ACP). This enzyme utilizes acyl-ACP as fatty acyl donor, but not acyl-CoA. This Streptococcus thermophilus (strain CNRZ 1066) protein is Phosphate acyltransferase.